The sequence spans 485 residues: ATP-dependent protease ATPase subunit HslU (485 aa).

Residues isoleucine 22 and 64-69 each bind ATP; that span reads GVGKTE. Positions 146-189 are disordered; the sequence is KKTAATSAQPQDVSQASSGTTISLPSVSSTAQAEEHKAQNENDM. Residues 149 to 177 show a composition bias toward polar residues; that stretch reads AATSAQPQDVSQASSGTTISLPSVSSTAQ. Basic and acidic residues predominate over residues 178–189; that stretch reads AEEHKAQNENDM. ATP-binding residues include aspartate 297, glutamate 363, and arginine 435.

This sequence belongs to the ClpX chaperone family. HslU subfamily. A double ring-shaped homohexamer of HslV is capped on each side by a ring-shaped HslU homohexamer. The assembly of the HslU/HslV complex is dependent on binding of ATP.

The protein resides in the cytoplasm. Its function is as follows. ATPase subunit of a proteasome-like degradation complex; this subunit has chaperone activity. The binding of ATP and its subsequent hydrolysis by HslU are essential for unfolding of protein substrates subsequently hydrolyzed by HslV. HslU recognizes the N-terminal part of its protein substrates and unfolds these before they are guided to HslV for hydrolysis. The chain is ATP-dependent protease ATPase subunit HslU from Treponema denticola (strain ATCC 35405 / DSM 14222 / CIP 103919 / JCM 8153 / KCTC 15104).